A 40-amino-acid polypeptide reads, in one-letter code: Photosystem II reaction center protein J (40 aa).

A helical membrane pass occupies residues 8–28; it reads IPLWIIGTVAGIPVIGLIGIF.

This sequence belongs to the PsbJ family. In terms of assembly, PSII is composed of 1 copy each of membrane proteins PsbA, PsbB, PsbC, PsbD, PsbE, PsbF, PsbH, PsbI, PsbJ, PsbK, PsbL, PsbM, PsbT, PsbX, PsbY, PsbZ, Psb30/Ycf12, at least 3 peripheral proteins of the oxygen-evolving complex and a large number of cofactors. It forms dimeric complexes.

It localises to the plastid. Its subcellular location is the chloroplast thylakoid membrane. Functionally, one of the components of the core complex of photosystem II (PSII). PSII is a light-driven water:plastoquinone oxidoreductase that uses light energy to abstract electrons from H(2)O, generating O(2) and a proton gradient subsequently used for ATP formation. It consists of a core antenna complex that captures photons, and an electron transfer chain that converts photonic excitation into a charge separation. This is Photosystem II reaction center protein J from Pelargonium hortorum (Common geranium).